A 325-amino-acid chain; its full sequence is Holliday junction branch migration complex subunit RuvB (325 aa).

Positions 1-180 (MKNQLLDAKV…FGIHLKLNFY (180 aa)) are large ATPase domain (RuvB-L). ATP-binding positions include Leu19, Arg20, Gly61, Lys64, Thr65, Ser66, 127–129 (EDF), Arg170, Tyr180, and Arg217. Thr65 contributes to the Mg(2+) binding site. Residues 181-251 (SCEELTQIVE…ITDYALNQLG (71 aa)) form a small ATPAse domain (RuvB-S) region. A head domain (RuvB-H) region spans residues 254–325 (KLGLDSSDHK…ITANALKHLH (72 aa)). Residues Arg290, Arg309, and Arg314 each coordinate DNA.

It belongs to the RuvB family. As to quaternary structure, homohexamer. Forms an RuvA(8)-RuvB(12)-Holliday junction (HJ) complex. HJ DNA is sandwiched between 2 RuvA tetramers; dsDNA enters through RuvA and exits via RuvB. An RuvB hexamer assembles on each DNA strand where it exits the tetramer. Each RuvB hexamer is contacted by two RuvA subunits (via domain III) on 2 adjacent RuvB subunits; this complex drives branch migration. In the full resolvosome a probable DNA-RuvA(4)-RuvB(12)-RuvC(2) complex forms which resolves the HJ.

Its subcellular location is the cytoplasm. The catalysed reaction is ATP + H2O = ADP + phosphate + H(+). In terms of biological role, the RuvA-RuvB-RuvC complex processes Holliday junction (HJ) DNA during genetic recombination and DNA repair, while the RuvA-RuvB complex plays an important role in the rescue of blocked DNA replication forks via replication fork reversal (RFR). RuvA specifically binds to HJ cruciform DNA, conferring on it an open structure. The RuvB hexamer acts as an ATP-dependent pump, pulling dsDNA into and through the RuvAB complex. RuvB forms 2 homohexamers on either side of HJ DNA bound by 1 or 2 RuvA tetramers; 4 subunits per hexamer contact DNA at a time. Coordinated motions by a converter formed by DNA-disengaged RuvB subunits stimulates ATP hydrolysis and nucleotide exchange. Immobilization of the converter enables RuvB to convert the ATP-contained energy into a lever motion, pulling 2 nucleotides of DNA out of the RuvA tetramer per ATP hydrolyzed, thus driving DNA branch migration. The RuvB motors rotate together with the DNA substrate, which together with the progressing nucleotide cycle form the mechanistic basis for DNA recombination by continuous HJ branch migration. Branch migration allows RuvC to scan DNA until it finds its consensus sequence, where it cleaves and resolves cruciform DNA. This chain is Holliday junction branch migration complex subunit RuvB, found in Orientia tsutsugamushi (strain Boryong) (Rickettsia tsutsugamushi).